Consider the following 445-residue polypeptide: Glutamyl-tRNA(Gln) amidotransferase subunit D (445 aa).

The region spanning 93-425 is the Asparaginase/glutaminase domain; sequence SEIKIISTGG…EKIRSLMISN (333 aa). Residues threonine 103, threonine 179, aspartate 180, and lysine 258 contribute to the active site.

It belongs to the asparaginase 1 family. GatD subfamily. Heterodimer of GatD and GatE.

It catalyses the reaction L-glutamyl-tRNA(Gln) + L-glutamine + ATP + H2O = L-glutaminyl-tRNA(Gln) + L-glutamate + ADP + phosphate + H(+). In terms of biological role, allows the formation of correctly charged Gln-tRNA(Gln) through the transamidation of misacylated Glu-tRNA(Gln) in organisms which lack glutaminyl-tRNA synthetase. The reaction takes place in the presence of glutamine and ATP through an activated gamma-phospho-Glu-tRNA(Gln). The GatDE system is specific for glutamate and does not act on aspartate. The chain is Glutamyl-tRNA(Gln) amidotransferase subunit D from Saccharolobus islandicus (strain M.16.27) (Sulfolobus islandicus).